A 280-amino-acid polypeptide reads, in one-letter code: Ataxin-3 homolog (280 aa).

In terms of domain architecture, Josephin spans 7-187 (GGMLYHEVQE…QECPMSSSSE (181 aa)). The active-site Nucleophile is the Cys20. The active-site Proton acceptor is His126. Asp141 is an active-site residue. 2 stretches are compositionally biased toward polar residues: residues 183 to 194 (SSSSEASNSFGQ) and 221 to 232 (DNVNQQRRNQAL). The interval 183–240 (SSSSEASNSFGQWLSPEDAERIRKNTSSGSSARNKRSNDNVNQQRRNQALSREEVQAF) is disordered. Residues 243 to 262 (MEDDDLKAAIAASLLDASAA) form the UIM domain.

The protein resides in the nucleus. It catalyses the reaction Thiol-dependent hydrolysis of ester, thioester, amide, peptide and isopeptide bonds formed by the C-terminal Gly of ubiquitin (a 76-residue protein attached to proteins as an intracellular targeting signal).. Its function is as follows. Interacts with key regulators of transcription and represses transcription. Acts as a histone-binding protein that regulates transcription. Acts as a deubiquitinating enzyme. In Arabidopsis thaliana (Mouse-ear cress), this protein is Ataxin-3 homolog.